The chain runs to 118 residues: Group 1 truncated hemoglobin GlbN (118 aa).

Position 70 (His-70) interacts with heme.

The protein belongs to the truncated hemoglobin family. Group I subfamily. As to quaternary structure, monomer. Heme serves as cofactor.

The protein resides in the membrane. In Nostoc sp. (strain MUN 8820), this protein is Group 1 truncated hemoglobin GlbN (glbN).